Here is a 312-residue protein sequence, read N- to C-terminus: Secreted RxLR effector protein 14 (312 aa).

The N-terminal stretch at 1-20 (MHSFKLLLALIVAICTSCDA) is a signal peptide. The RxLR-dEER motif lies at 46-61 (RLLRAKDGKVRADEER).

The protein belongs to the RxLR effector family.

Its subcellular location is the secreted. It is found in the host nucleus. Secreted effector that completely suppresses the host cell death induced by cell death-inducing proteins. The polypeptide is Secreted RxLR effector protein 14 (Plasmopara viticola (Downy mildew of grapevine)).